Consider the following 463-residue polypeptide: Asparagine--tRNA ligase (463 aa).

It belongs to the class-II aminoacyl-tRNA synthetase family. Homodimer.

It localises to the cytoplasm. The catalysed reaction is tRNA(Asn) + L-asparagine + ATP = L-asparaginyl-tRNA(Asn) + AMP + diphosphate + H(+). The protein is Asparagine--tRNA ligase of Clostridium tetani (strain Massachusetts / E88).